We begin with the raw amino-acid sequence, 291 residues long: 3-methylcatechol 2,3-dioxygenase (291 aa).

2 consecutive VOC domains span residues 5–119 (RLGY…IYYG) and 143–264 (GLGH…YGWG). The Fe cation site is built by H146, H210, and E260.

The protein belongs to the extradiol ring-cleavage dioxygenase family. In terms of assembly, homooctamer. Fe(2+) serves as cofactor.

The catalysed reaction is 3-methylcatechol + O2 = 2-hydroxy-6-oxo-2,4-heptadienoate + H(+). The protein operates within xenobiotic degradation; toluene degradation. This is 3-methylcatechol 2,3-dioxygenase (todE) from Pseudomonas putida (strain ATCC 700007 / DSM 6899 / JCM 31910 / BCRC 17059 / LMG 24140 / F1).